A 193-amino-acid chain; its full sequence is MNTYKNSLNHFLNLVDCLEKIPNVGKKSAFKMAYHLGLENPYLALKITHALENALENLKTCSSCNALSESEVCEICSDESRQNSQLCMVLHPRDVFILEDLKDFLGRYYVLNSIEEVDFNALEKRLIEENIKEIIFAFPPTLANDSLMLYIEDKLQHFHLTFTKIAQGVPTGVNFENIDSVSLSRAFNSRIKA.

The segment at 61–76 adopts a C4-type zinc-finger fold; the sequence is CSSCNALSESEVCEIC. Residues 84–170 form the Toprim domain; it reads SQLCMVLHPR…TFTKIAQGVP (87 aa).

The protein belongs to the RecR family.

May play a role in DNA repair. It seems to be involved in an RecBC-independent recombinational process of DNA repair. It may act with RecF and RecO. In Helicobacter pylori (strain P12), this protein is Recombination protein RecR.